A 108-amino-acid chain; its full sequence is UPF0102 protein Tpet_0671 (108 aa).

This sequence belongs to the UPF0102 family.

The polypeptide is UPF0102 protein Tpet_0671 (Thermotoga petrophila (strain ATCC BAA-488 / DSM 13995 / JCM 10881 / RKU-1)).